The chain runs to 111 residues: Large ribosomal subunit protein uL22 (111 aa).

This sequence belongs to the universal ribosomal protein uL22 family. In terms of assembly, part of the 50S ribosomal subunit.

Its function is as follows. This protein binds specifically to 23S rRNA; its binding is stimulated by other ribosomal proteins, e.g. L4, L17, and L20. It is important during the early stages of 50S assembly. It makes multiple contacts with different domains of the 23S rRNA in the assembled 50S subunit and ribosome. Functionally, the globular domain of the protein is located near the polypeptide exit tunnel on the outside of the subunit, while an extended beta-hairpin is found that lines the wall of the exit tunnel in the center of the 70S ribosome. This Geobacter sulfurreducens (strain ATCC 51573 / DSM 12127 / PCA) protein is Large ribosomal subunit protein uL22.